Reading from the N-terminus, the 261-residue chain is UPF0177 protein YvdC (261 aa).

Transmembrane regions (helical) follow at residues 15–35, 43–63, 84–104, 123–143, 197–217, and 239–259; these read WVIVIILALLFSALSVSIFHL, VLSIVGLIFAYHKSVWLVLFI, LDTVIFFIIFLLTIISSYLIA, IIIGFALLFLVSILTGIFAQI, YFAFLTALLLFAYMHGPTDLY, and FYLNMSVHLLWNLFGLVIALV.

It belongs to the UPF0177 family.

Its subcellular location is the cell membrane. This is UPF0177 protein YvdC (yvdC) from Lactococcus lactis subsp. lactis (strain IL1403) (Streptococcus lactis).